The chain runs to 584 residues: Cationic amino acid transporter 7, chloroplastic (584 aa).

The N-terminal 49 residues, 1–49, are a transit peptide targeting the chloroplast; that stretch reads MEAQYRNHDGDTSFSSLRVYLNSLSDTPSRFSRRAVSVSTSYDEMSRVR. 14 consecutive transmembrane segments (helical) span residues 62 to 82, 90 to 110, 131 to 151, 185 to 205, 214 to 234, 254 to 274, 293 to 313, 346 to 366, 396 to 416, 417 to 437, 449 to 469, 480 to 500, 508 to 528, and 540 to 560; these read WYDL…FVTT, AGPS…LSAF, ITFG…DYVL, GFNE…FVIC, VNMV…VMGF, FFPF…LSYI, IPMG…LMAI, VVGI…MLGQ, ASAF…LNVL, LNLV…AVIF, WPTL…TLVW, FILG…HCVV, FWGV…NIFL, and FGFF…HASY.

This sequence belongs to the amino acid-polyamine-organocation (APC) superfamily. Cationic amino acid transporter (CAT) (TC 2.A.3.3) family.

The protein resides in the plastid. It localises to the chloroplast membrane. Its function is as follows. Permease involved in the transport of the cationic amino acids. In Arabidopsis thaliana (Mouse-ear cress), this protein is Cationic amino acid transporter 7, chloroplastic (CAT7).